We begin with the raw amino-acid sequence, 510 residues long: Arginine biosynthesis bifunctional protein ArgJ, chloroplastic (510 aa).

Residues T223, K249, E359, N505, and T510 each coordinate substrate.

It belongs to the ArgJ family. Heterodimer of an alpha and a beta chain.

Its subcellular location is the plastid. The protein localises to the chloroplast. The enzyme catalyses N(2)-acetyl-L-ornithine + L-glutamate = N-acetyl-L-glutamate + L-ornithine. The catalysed reaction is L-glutamate + acetyl-CoA = N-acetyl-L-glutamate + CoA + H(+). Its pathway is amino-acid biosynthesis; L-arginine biosynthesis; L-ornithine and N-acetyl-L-glutamate from L-glutamate and N(2)-acetyl-L-ornithine (cyclic): step 1/1. The protein operates within amino-acid biosynthesis; L-arginine biosynthesis; N(2)-acetyl-L-ornithine from L-glutamate: step 1/4. Its function is as follows. Catalyzes two activities which are involved in the cyclic version of arginine biosynthesis: the synthesis of acetylglutamate from glutamate and acetyl-CoA, and of ornithine by transacetylation between acetylornithine and glutamate. The protein is Arginine biosynthesis bifunctional protein ArgJ, chloroplastic of Vitis vinifera (Grape).